The sequence spans 329 residues: Deoxynucleotidyltransferase terminal-interacting protein 1 (329 aa).

Disordered regions lie at residues 1–22 (MGATGDAEQPRGPSGAERGGLE) and 147–178 (KRGRQAEEECAHRGSPLPKKRKGRPPGHILSS). The segment at 56–147 (MTTSFTDPAI…RLTHELPGIK (92 aa)) is important for dimerization. Over residues 147 to 158 (KRGRQAEEECAH) the composition is skewed to basic and acidic residues. Positions 159-173 (RGSPLPKKRKGRPPG) form a DNA-binding region, a.T hook. Ser161 carries the post-translational modification Phosphoserine. Positions 164 to 170 (PKKRKGR) match the Nuclear localization signal motif. Residues 197–316 (REGPKWDPAR…MRKYMETLRT (120 aa)) form an important for DNA and nucleosome binding region. A DNA-binding region (H-T-H motif) is located at residues 216 to 237 (GSRANKALGMGGTRGRIYIKHP).

Monomer and homodimer. A minor proportion may form homotrimers. Interacts with ZNF541. Interacts with the terminal deoxynucleotidyltransferase DNTT. Interacts with TRERF1. Identified in a histone deacetylase complex that contains DNTTIP1, HDAC1 and MIDEAS; this complex assembles into a tetramer that contains four copies of each protein chain. Component of a histone deacetylase complex containing DNTTIP1, ZNF541, HDAC1 and HDAC2. Identified in a complex with KCTD19, HDAC1, HDAC2 and ZNF541.

It localises to the nucleus. Its function is as follows. Increases DNTT terminal deoxynucleotidyltransferase activity (in vitro). Also acts as a transcriptional regulator, binding to the consensus sequence 5'-GNTGCATG-3' following an AT-tract. Associates with RAB20 promoter and positively regulates its transcription. Binds DNA and nucleosomes; may recruit HDAC1 complexes to nucleosomes or naked DNA. The sequence is that of Deoxynucleotidyltransferase terminal-interacting protein 1 (DNTTIP1) from Homo sapiens (Human).